The primary structure comprises 216 residues: Protein Syd (216 aa).

This sequence belongs to the Syd family.

It localises to the cell inner membrane. Functionally, interacts with the SecY protein in vivo. May bind preferentially to an uncomplexed state of SecY, thus functioning either as a chelating agent for excess SecY in the cell or as a regulatory factor that negatively controls the translocase function. The polypeptide is Protein Syd (Shewanella sp. (strain W3-18-1)).